The following is a 193-amino-acid chain: Large ribosomal subunit protein uL18 (193 aa).

Belongs to the universal ribosomal protein uL18 family. In terms of assembly, part of the 50S ribosomal subunit. Contacts the 5S and 23S rRNAs.

Functionally, this is one of the proteins that bind and probably mediate the attachment of the 5S RNA into the large ribosomal subunit, where it forms part of the central protuberance. The polypeptide is Large ribosomal subunit protein uL18 (Methanococcus maripaludis (strain DSM 14266 / JCM 13030 / NBRC 101832 / S2 / LL)).